Consider the following 199-residue polypeptide: Holliday junction branch migration complex subunit RuvA (199 aa).

The tract at residues 1-64 (MIARLTGMLA…EDAISLFGFR (64 aa)) is domain I. The tract at residues 65–143 (TVAEKEFFQV…KMDVAPSTKE (79 aa)) is domain II. The interval 144–154 (AAPSEAPPEVA) is flexible linker. A domain III region spans residues 154 to 199 (ADDVASALVNLGYKEAVVRKVLAEMAIESGASTEAVLRQALKILMK).

Belongs to the RuvA family. Homotetramer. Forms an RuvA(8)-RuvB(12)-Holliday junction (HJ) complex. HJ DNA is sandwiched between 2 RuvA tetramers; dsDNA enters through RuvA and exits via RuvB. An RuvB hexamer assembles on each DNA strand where it exits the tetramer. Each RuvB hexamer is contacted by two RuvA subunits (via domain III) on 2 adjacent RuvB subunits; this complex drives branch migration. In the full resolvosome a probable DNA-RuvA(4)-RuvB(12)-RuvC(2) complex forms which resolves the HJ.

Its subcellular location is the cytoplasm. Functionally, the RuvA-RuvB-RuvC complex processes Holliday junction (HJ) DNA during genetic recombination and DNA repair, while the RuvA-RuvB complex plays an important role in the rescue of blocked DNA replication forks via replication fork reversal (RFR). RuvA specifically binds to HJ cruciform DNA, conferring on it an open structure. The RuvB hexamer acts as an ATP-dependent pump, pulling dsDNA into and through the RuvAB complex. HJ branch migration allows RuvC to scan DNA until it finds its consensus sequence, where it cleaves and resolves the cruciform DNA. The protein is Holliday junction branch migration complex subunit RuvA of Geobacter metallireducens (strain ATCC 53774 / DSM 7210 / GS-15).